Consider the following 65-residue polypeptide: Small ribosomal subunit protein eS27 (65 aa).

Positions 21, 24, 40, and 43 each coordinate Zn(2+). A C4-type zinc finger spans residues 21–43 (CKDCGNVQVVFARPSSVVTCNIC).

Belongs to the eukaryotic ribosomal protein eS27 family. As to quaternary structure, part of the 30S ribosomal subunit. The cofactor is Zn(2+).

This Thermoplasma volcanium (strain ATCC 51530 / DSM 4299 / JCM 9571 / NBRC 15438 / GSS1) protein is Small ribosomal subunit protein eS27.